The sequence spans 133 residues: Large ribosomal subunit protein bL21 (133 aa).

Positions Met1 to Ser22 are disordered.

It belongs to the bacterial ribosomal protein bL21 family. As to quaternary structure, part of the 50S ribosomal subunit. Contacts protein L20.

This protein binds to 23S rRNA in the presence of protein L20. This chain is Large ribosomal subunit protein bL21, found in Prochlorococcus marinus (strain MIT 9303).